The following is a 228-amino-acid chain: MEGLTDRQLEVLRFIASQIEDHGYPPTIREIGEALDIRSTNGVNDHLKALERKGYLSRDPVKSRALIPTSAAREALGGGETGSNVVPLVRGPARPGSRMIEIPIVGRVAAGMPILAQERVEDTVQVDAFLLGTNKKVYGLRVQGDSMIGDGILPGDYVFVKKQLNADDGEIVVAMIDDEATVKRVYFEGDRVRFQPSNPRMAPIYVRHSDFRSTMILGVVVGVYRKLT.

Positions 28–48 (IREIGEALDIRSTNGVNDHLK) form a DNA-binding region, H-T-H motif. Active-site for autocatalytic cleavage activity residues include serine 146 and lysine 183.

Belongs to the peptidase S24 family. Homodimer.

The enzyme catalyses Hydrolysis of Ala-|-Gly bond in repressor LexA.. Its function is as follows. Represses a number of genes involved in the response to DNA damage (SOS response), including recA and lexA. In the presence of single-stranded DNA, RecA interacts with LexA causing an autocatalytic cleavage which disrupts the DNA-binding part of LexA, leading to derepression of the SOS regulon and eventually DNA repair. The polypeptide is LexA repressor (Anaeromyxobacter dehalogenans (strain 2CP-1 / ATCC BAA-258)).